Consider the following 38-residue polypeptide: Large ribosomal subunit protein bL36 (38 aa).

It belongs to the bacterial ribosomal protein bL36 family.

This is Large ribosomal subunit protein bL36 from Sorangium cellulosum (strain So ce56) (Polyangium cellulosum (strain So ce56)).